The primary structure comprises 274 residues: 2,3,4,5-tetrahydropyridine-2,6-dicarboxylate N-succinyltransferase (274 aa).

Residues arginine 106 and aspartate 143 each contribute to the substrate site.

It belongs to the transferase hexapeptide repeat family. As to quaternary structure, homotrimer.

It is found in the cytoplasm. It catalyses the reaction (S)-2,3,4,5-tetrahydrodipicolinate + succinyl-CoA + H2O = (S)-2-succinylamino-6-oxoheptanedioate + CoA. It participates in amino-acid biosynthesis; L-lysine biosynthesis via DAP pathway; LL-2,6-diaminopimelate from (S)-tetrahydrodipicolinate (succinylase route): step 1/3. This is 2,3,4,5-tetrahydropyridine-2,6-dicarboxylate N-succinyltransferase from Paracidovorax citrulli (strain AAC00-1) (Acidovorax citrulli).